The following is a 259-amino-acid chain: MNDIWWQTTGEGNCHLVLLHGWGLNAEVWRCISQELSSHFTLHLVDLPGYGRSQGYGALTLDEMARLVASRAPECAIWLGWSLGGLVASQVALSEPSRVDALVTVASSPCFQAGADWPGIKPEVLSGFQRQLSEDFQRTVERFLALQTLGTETARQDARVLKSIVLAQPMPGADVLNGGLEILKTADLREALTAWQGPFLRLYGRLDGLVLRKVAALLDARFPDSESQVFEKAAHAPFISHPREFCDALLALKARLANR.

In terms of domain architecture, AB hydrolase-1 spans 15–242; sequence HLVLLHGWGL…AAHAPFISHP (228 aa). Substrate contacts are provided by residues W22, 82–83, and 143–147; these read SL and FLALQ. The active-site Nucleophile is S82. Catalysis depends on residues D207 and H235. Residue H235 participates in substrate binding.

This sequence belongs to the AB hydrolase superfamily. Carboxylesterase BioH family. As to quaternary structure, monomer.

It is found in the cytoplasm. It carries out the reaction 6-carboxyhexanoyl-[ACP] methyl ester + H2O = 6-carboxyhexanoyl-[ACP] + methanol + H(+). Its pathway is cofactor biosynthesis; biotin biosynthesis. Its function is as follows. The physiological role of BioH is to remove the methyl group introduced by BioC when the pimeloyl moiety is complete. It allows to synthesize pimeloyl-ACP via the fatty acid synthetic pathway through the hydrolysis of the ester bonds of pimeloyl-ACP esters. This is Pimeloyl-[acyl-carrier protein] methyl ester esterase from Cronobacter sakazakii (strain ATCC BAA-894) (Enterobacter sakazakii).